Here is a 407-residue protein sequence, read N- to C-terminus: MRWFRALLKNASLAGAPKYIEHFSKFSPSPLSMKQFLDFGSSNACEKTSFTFLRQELPVRLANIMKEINLLPDRVLSTPSVQLVQSWYVQSLLDIMEFLDKDPEDHRTLSQFTDALVTIRNRHNDVVPTMAQGVLEYKDTYGDDPVSNQNIQYFLDRFYLSRISIRMLINQHTLIFDGSTNPAHPKHIGSIDPNCSVSDVVKDAYDMAKLLCDKYYMASPDLEIQEVNATNATQPIHMVYVPSHLYHMLFELFKNAMRATVESHESSLTLPPIKIMVALGEEDLSIKMSDRGGGVPLRKIERLFSYMYSTAPTPQPGTGGTPLAGFGYGLPISRLYAKYFQGDLQLFSMEGFGTDAVIYLKALSTDSVERLPVYNKSAWRHYQTIQEAGDWCVPSTEPKNTSTYRVS.

Residues 135-364 enclose the Histidine kinase domain; it reads LEYKDTYGDD…DAVIYLKALS (230 aa). A phosphotyrosine mark is found at Y215 and Y216. Residues 251-258, D290, 309-310, and 325-330 contribute to the ATP site; these read ELFKNAMR, ST, and GFGYGL. K376 carries the N6-succinyllysine modification.

It belongs to the PDK/BCKDK protein kinase family. In terms of assembly, homodimer, and heterodimer with PDK1. Interacts with the pyruvate dehydrogenase complex subunit DLAT, and is part of the multimeric pyruvate dehydrogenase complex that contains multiple copies of pyruvate dehydrogenase (E1), dihydrolipoamide acetyltransferase (DLAT, E2) and lipoamide dehydrogenase (DLD, E3). Detected in heart (at protein level). Highest level of expression in heart and skeletal muscle and the lowest in spleen and lung. Liver, kidney, brain and testis levels are intermediate.

The protein localises to the mitochondrion matrix. The enzyme catalyses L-seryl-[pyruvate dehydrogenase E1 alpha subunit] + ATP = O-phospho-L-seryl-[pyruvate dehydrogenase E1 alpha subunit] + ADP + H(+). Activity increases in response to increased acetyl-CoA and NADH levels and upon binding to the pyruvate dehydrogenase subunit DLAT. Inhibited by ADP and pyruvate; these compounds interfere with DLAT binding and thereby inhibit kinase activity. Inhibited by dichloroacetate. Inhibited by AZD7545; this compound interferes with DLAT binding and thereby inhibits kinase activity. Reactive oxygen species cause the formation of disulfide bonds, and thereby inhibit the enzyme. Kinase that plays a key role in the regulation of glucose and fatty acid metabolism and homeostasis via phosphorylation of the pyruvate dehydrogenase subunits PDHA1 and PDHA2. This inhibits pyruvate dehydrogenase activity, and thereby regulates metabolite flux through the tricarboxylic acid cycle, down-regulates aerobic respiration and inhibits the formation of acetyl-coenzyme A from pyruvate. Inhibition of pyruvate dehydrogenase decreases glucose utilization and increases fat metabolism. Mediates cellular responses to insulin. Plays an important role in maintaining normal blood glucose levels and in metabolic adaptation to nutrient availability. Via its regulation of pyruvate dehydrogenase activity, plays an important role in maintaining normal blood pH and in preventing the accumulation of ketone bodies under starvation. Plays a role in the regulation of cell proliferation and in resistance to apoptosis under oxidative stress. Plays a role in p53/TP53-mediated apoptosis. In Rattus norvegicus (Rat), this protein is [Pyruvate dehydrogenase (acetyl-transferring)] kinase isozyme 2, mitochondrial (Pdk2).